The primary structure comprises 92 residues: Small ribosomal subunit protein uS19 (92 aa).

This sequence belongs to the universal ribosomal protein uS19 family.

Its function is as follows. Protein S19 forms a complex with S13 that binds strongly to the 16S ribosomal RNA. The polypeptide is Small ribosomal subunit protein uS19 (Staphylococcus aureus (strain Mu3 / ATCC 700698)).